A 405-amino-acid polypeptide reads, in one-letter code: Cytochrome P450 130 (405 aa).

2 residues coordinate substrate: Asp93 and His97. 7 residues coordinate heme: Arg101, Gly243, Arg295, Tyr318, Ser348, His352, and Cys354.

It belongs to the cytochrome P450 family. As to quaternary structure, homodimer. The cofactor is heme.

The chain is Cytochrome P450 130 (cyp130) from Mycobacterium tuberculosis (strain CDC 1551 / Oshkosh).